We begin with the raw amino-acid sequence, 649 residues long: MKFKWDEFFVTGDPLILGAQVSIALSTIAIIFVLTYFKKWKWLWSEWITTVDHKKLGIMYIISAVIMLFRGGVDGLMMRAQLALPNNSFLDSNHYNEIFTTHGTIMIIFMAMPFLIGLINVVVPLQIGARDVAFPYLNNLSFWTFFVGAMLFNISFVIGGSPNAGWTSYMPLASNDMSPGPGENYYLLGLQIAGIGTLMTGINFMVTILKMRTKGMTLMRMPMFTWTTLITMVIIVFAFPVLTVALALLSFDRLFGAHFFTLEAGGMPMLWANLFWIWGHPEVYIVILPAFGIFSEIISSFARKQLFGYKAMVGSIIAISVLSFLVWTHHFFTMGNSASVNSFFSITTMAISIPTGVKIFNWLFTMYKGRISFTTPMLWALAFIPNFVIGGVTGVMLAMAAADYQYHNTYFLVSHFHYVLIAGTVFACFAGFIFWYPKMFGHKLNERIGKWFFWIFMIGFNICFFPQYFLGLQGMPRRIYTYGPNDGWTTLNFISTVGAFMMGVGFLILCYNIYYSFRYSTREISGDSWGVGRTLDWATSSAIPPHYNFAVLPEVKSQDAFLHMKEEKTELYPESKFKKIHMPSNSGRPFFMSVAFGLAGFGLVFEWYWMGVVGLIGVLLCMVLRSFEYDNGYYISVDEIKETERKISE.

The Extracellular portion of the chain corresponds to 1 to 15 (MKFKWDEFFVTGDPL). A helical membrane pass occupies residues 16 to 34 (ILGAQVSIALSTIAIIFVL). Over 35-56 (TYFKKWKWLWSEWITTVDHKKL) the chain is Cytoplasmic. The chain crosses the membrane as a helical span at residues 57-75 (GIMYIISAVIMLFRGGVDG). Residues 76-97 (LMMRAQLALPNNSFLDSNHYNE) are Extracellular-facing. The chain crosses the membrane as a helical span at residues 98-117 (IFTTHGTIMIIFMAMPFLIG). Residue His102 participates in Fe(II)-heme a binding. Topologically, residues 118–139 (LINVVVPLQIGARDVAFPYLNN) are cytoplasmic. The chain crosses the membrane as a helical span at residues 140-157 (LSFWTFFVGAMLFNISFV). The Extracellular portion of the chain corresponds to 158–190 (IGGSPNAGWTSYMPLASNDMSPGPGENYYLLGL). A helical membrane pass occupies residues 191–209 (QIAGIGTLMTGINFMVTIL). At 210–227 (KMRTKGMTLMRMPMFTWT) the chain is on the cytoplasmic side. Residues 228 to 246 (TLITMVIIVFAFPVLTVAL) traverse the membrane as a helical segment. The Extracellular segment spans residues 247–272 (ALLSFDRLFGAHFFTLEAGGMPMLWA). The helical transmembrane segment at 273-292 (NLFWIWGHPEVYIVILPAFG) threads the bilayer. Cu cation contacts are provided by His280 and Tyr284. The 1'-histidyl-3'-tyrosine (His-Tyr) cross-link spans 280 to 284 (HPEVY). Over 293-315 (IFSEIISSFARKQLFGYKAMVGS) the chain is Cytoplasmic. Residues 316-335 (IIAISVLSFLVWTHHFFTMG) traverse the membrane as a helical segment. Cu cation-binding residues include His329 and His330. Residues 336–343 (NSASVNSF) are Extracellular-facing. A helical membrane pass occupies residues 344 to 362 (FSITTMAISIPTGVKIFNW). Topologically, residues 363-377 (LFTMYKGRISFTTPM) are cytoplasmic. Residues 378-397 (LWALAFIPNFVIGGVTGVML) traverse the membrane as a helical segment. The Extracellular segment spans residues 398–405 (AMAAADYQ). A helical membrane pass occupies residues 406–425 (YHNTYFLVSHFHYVLIAGTV). His415 contacts heme a3. His417 is a binding site for Fe(II)-heme a. The Cytoplasmic segment spans residues 426–452 (FACFAGFIFWYPKMFGHKLNERIGKWF). The chain crosses the membrane as a helical span at residues 453–472 (FWIFMIGFNICFFPQYFLGL). The Extracellular segment spans residues 473 to 490 (QGMPRRIYTYGPNDGWTT). A helical transmembrane segment spans residues 491-510 (LNFISTVGAFMMGVGFLILC). Over 511–584 (YNIYYSFRYS…SKFKKIHMPS (74 aa)) the chain is Cytoplasmic. Residues 585–604 (NSGRPFFMSVAFGLAGFGLV) form a helical membrane-spanning segment. Topologically, residues 605 to 610 (FEWYWM) are extracellular. A helical transmembrane segment spans residues 611-631 (GVVGLIGVLLCMVLRSFEYDN). Topologically, residues 632–649 (GYYISVDEIKETERKISE) are cytoplasmic.

This sequence belongs to the heme-copper respiratory oxidase family. Requires Cu cation as cofactor. Ferriheme a is required as a cofactor. The cofactor is Heme A3..

It is found in the cell membrane. The enzyme catalyses 2 a quinol + O2 = 2 a quinone + 2 H2O. It functions in the pathway energy metabolism; oxidative phosphorylation. Functionally, catalyzes quinol oxidation with the concomitant reduction of oxygen to water. Major component for energy conversion during vegetative growth. The polypeptide is Quinol oxidase subunit 1 (qoxB) (Bacillus subtilis (strain 168)).